The chain runs to 342 residues: Heat-inducible transcription repressor HrcA (342 aa).

The protein belongs to the HrcA family.

Functionally, negative regulator of class I heat shock genes (grpE-dnaK-dnaJ and groELS operons). Prevents heat-shock induction of these operons. This chain is Heat-inducible transcription repressor HrcA, found in Leptospira borgpetersenii serovar Hardjo-bovis (strain JB197).